Reading from the N-terminus, the 170-residue chain is Endoribonuclease YbeY (170 aa).

Zn(2+)-binding residues include His128, His132, and His138.

Belongs to the endoribonuclease YbeY family. Zn(2+) is required as a cofactor.

It is found in the cytoplasm. Single strand-specific metallo-endoribonuclease involved in late-stage 70S ribosome quality control and in maturation of the 3' terminus of the 16S rRNA. This is Endoribonuclease YbeY from Ruegeria sp. (strain TM1040) (Silicibacter sp.).